The primary structure comprises 184 residues: ATP-dependent protease subunit HslV (184 aa).

Residue T12 is part of the active site. Na(+) is bound by residues A166, C169, and T172.

Belongs to the peptidase T1B family. HslV subfamily. In terms of assembly, a double ring-shaped homohexamer of HslV is capped on each side by a ring-shaped HslU homohexamer. The assembly of the HslU/HslV complex is dependent on binding of ATP.

The protein resides in the cytoplasm. The catalysed reaction is ATP-dependent cleavage of peptide bonds with broad specificity.. Its activity is regulated as follows. Allosterically activated by HslU binding. Protease subunit of a proteasome-like degradation complex believed to be a general protein degrading machinery. This chain is ATP-dependent protease subunit HslV, found in Brucella ovis (strain ATCC 25840 / 63/290 / NCTC 10512).